Reading from the N-terminus, the 1106-residue chain is Translation initiation factor IF-2 (1106 aa).

Composition is skewed to low complexity over residues 57–72 (GKAAGGAKAPAKPDAG) and 81–97 (APSTPSQSAGAPASAPP). 2 disordered regions span residues 57–434 (GKAA…QKVH) and 466–497 (PSKPKNLPGNKGARPVALRRRKKETTRQRQRR). Pro residues-rich tracts occupy residues 113 to 123 (PAKPAPSAPPS) and 138 to 148 (PAKPAPSAPPS). A compositionally biased stretch (low complexity) spans 172-199 (AKPVAKPASAPAPARPAQPLRPQASNRP). Pro residues-rich tracts occupy residues 200–214 (PQQPSNRPPARPAAK) and 223–235 (TAPPPRPARPGAP). Composition is skewed to low complexity over residues 251-292 (PNQQ…QQRR), 319-329 (PQGRQGGAPSR), and 395-405 (YRPAAAPGMAG). Positions 408 to 422 (RRPDWDDSARLDALR) are enriched in basic and acidic residues. Basic residues predominate over residues 482 to 497 (ALRRRKKETTRQRQRR). The 174-residue stretch at 598 to 771 (RRPPVVTVMG…LLVTEVEDLK (174 aa)) folds into the tr-type G domain. The G1 stretch occupies residues 607–614 (GHVDHGKT). 607–614 (GHVDHGKT) is a binding site for GTP. Residues 632–636 (GITQH) form a G2 region. Positions 657–660 (DTPG) are G3. GTP contacts are provided by residues 657-661 (DTPGH) and 711-714 (NKVD). The interval 711 to 714 (NKVD) is G4. A G5 region spans residues 747 to 749 (SAL).

This sequence belongs to the TRAFAC class translation factor GTPase superfamily. Classic translation factor GTPase family. IF-2 subfamily.

Its subcellular location is the cytoplasm. Its function is as follows. One of the essential components for the initiation of protein synthesis. Protects formylmethionyl-tRNA from spontaneous hydrolysis and promotes its binding to the 30S ribosomal subunits. Also involved in the hydrolysis of GTP during the formation of the 70S ribosomal complex. The chain is Translation initiation factor IF-2 from Synechococcus sp. (strain RCC307).